The chain runs to 264 residues: Orotidine 5'-phosphate decarboxylase (264 aa).

Substrate-binding positions include aspartate 40, 62–64, 93–102, tyrosine 214, and arginine 233; these read KTH and DRKFADIGNT. Lysine 95 acts as the Proton donor in catalysis.

It belongs to the OMP decarboxylase family.

It catalyses the reaction orotidine 5'-phosphate + H(+) = UMP + CO2. Its pathway is pyrimidine metabolism; UMP biosynthesis via de novo pathway; UMP from orotate: step 2/2. The sequence is that of Orotidine 5'-phosphate decarboxylase (ura4) from Schizosaccharomyces pombe (strain 972 / ATCC 24843) (Fission yeast).